A 148-amino-acid polypeptide reads, in one-letter code: Large ribosomal subunit protein bL9 (148 aa).

It belongs to the bacterial ribosomal protein bL9 family.

Binds to the 23S rRNA. In Desulfatibacillum aliphaticivorans, this protein is Large ribosomal subunit protein bL9.